Reading from the N-terminus, the 259-residue chain is UPF0246 protein Avin_11220 (259 aa).

Belongs to the UPF0246 family.

This Azotobacter vinelandii (strain DJ / ATCC BAA-1303) protein is UPF0246 protein Avin_11220.